Here is a 182-residue protein sequence, read N- to C-terminus: Large ribosomal subunit protein uL5 (182 aa).

The protein belongs to the universal ribosomal protein uL5 family. In terms of assembly, part of the 50S ribosomal subunit; part of the 5S rRNA/L5/L18/L25 subcomplex. Contacts the 5S rRNA and the P site tRNA. Forms a bridge to the 30S subunit in the 70S ribosome.

Its function is as follows. This is one of the proteins that bind and probably mediate the attachment of the 5S RNA into the large ribosomal subunit, where it forms part of the central protuberance. In the 70S ribosome it contacts protein S13 of the 30S subunit (bridge B1b), connecting the 2 subunits; this bridge is implicated in subunit movement. Contacts the P site tRNA; the 5S rRNA and some of its associated proteins might help stabilize positioning of ribosome-bound tRNAs. The sequence is that of Large ribosomal subunit protein uL5 from Borrelia garinii subsp. bavariensis (strain ATCC BAA-2496 / DSM 23469 / PBi) (Borreliella bavariensis).